The chain runs to 342 residues: tRNA N6-adenosine threonylcarbamoyltransferase (342 aa).

Residues H111 and H115 each contribute to the Fe cation site. Substrate-binding positions include 134–138, D167, G180, and N277; that span reads LVSGG. D305 lines the Fe cation pocket.

The protein belongs to the KAE1 / TsaD family. The cofactor is Fe(2+).

Its subcellular location is the cytoplasm. It catalyses the reaction L-threonylcarbamoyladenylate + adenosine(37) in tRNA = N(6)-L-threonylcarbamoyladenosine(37) in tRNA + AMP + H(+). In terms of biological role, required for the formation of a threonylcarbamoyl group on adenosine at position 37 (t(6)A37) in tRNAs that read codons beginning with adenine. Is involved in the transfer of the threonylcarbamoyl moiety of threonylcarbamoyl-AMP (TC-AMP) to the N6 group of A37, together with TsaE and TsaB. TsaD likely plays a direct catalytic role in this reaction. The polypeptide is tRNA N6-adenosine threonylcarbamoyltransferase (Cellvibrio japonicus (strain Ueda107) (Pseudomonas fluorescens subsp. cellulosa)).